The primary structure comprises 222 residues: DnaJ homolog subfamily B member 9 (222 aa).

Residues 1 to 23 (MATPQSVFVFAICILMITELILA) form the signal peptide. The 65-residue stretch at 26 to 90 (NYYDILGVPK…NRRKEYDIIG (65 aa)) folds into the J domain. Residues 91–222 (HSAFTNGKGQ…VTTYTDCSGQ (132 aa)) are divergent targeting domain. Serine 133 is subject to Phosphoserine.

As to quaternary structure, interacts with HSPA5/BiP; interaction is direct. Interacts with ERN1/IRE1 (via the luminal region). Interacts with DERL1.

Its subcellular location is the endoplasmic reticulum lumen. Its function is as follows. Co-chaperone for Hsp70 protein HSPA5/BiP that acts as a key repressor of the ERN1/IRE1-mediated unfolded protein response (UPR). J domain-containing co-chaperones stimulate the ATPase activity of Hsp70 proteins and are required for efficient substrate recognition by Hsp70 proteins. In the unstressed endoplasmic reticulum, interacts with the luminal region of ERN1/IRE1 and selectively recruits HSPA5/BiP: HSPA5/BiP disrupts the dimerization of the active ERN1/IRE1 luminal region, thereby inactivating ERN1/IRE1. Also involved in endoplasmic reticulum-associated degradation (ERAD) of misfolded proteins. Required for survival of B-cell progenitors and normal antibody production. This is DnaJ homolog subfamily B member 9 from Rattus norvegicus (Rat).